A 223-amino-acid chain; its full sequence is Probable glutathione S-transferase (223 aa).

A GST N-terminal domain is found at A2 to S81. Glutathione-binding positions include S12, K39, V53, and E65–S66. Positions D86–F212 constitute a GST C-terminal domain.

It belongs to the GST superfamily. HSP26 family. In terms of tissue distribution, root tip-specific expression.

It catalyses the reaction RX + glutathione = an S-substituted glutathione + a halide anion + H(+). The polypeptide is Probable glutathione S-transferase (Nicotiana tabacum (Common tobacco)).